A 1283-amino-acid polypeptide reads, in one-letter code: uncharacterized protein (1283 aa).

The 37-residue stretch at 10–46 (ACPPNTFTCADGSCIPSDWKGDGEKDCEDGSDEEAVT) folds into the LDL-receptor class A domain. Cystine bridges form between C11–C23 and C18–C36. The segment at 27–47 (DWKGDGEKDCEDGSDEEAVTG) is disordered. Acidic residues predominate over residues 34–45 (KDCEDGSDEEAV). Residue N79 is glycosylated (N-linked (GlcNAc...) asparagine). The disordered stretch occupies residues 236–278 (STTLIVDETTESTSASAEDDDDDVLTTNTSEESTATTAHDEEV). Positions 261 to 272 (TTNTSEESTATT) are enriched in low complexity. Residues 332-389 (YQKTLEKEKCAIRNATSKCEALISYNNNLDCAIVTMNDECEVDAQNLVVELQEEVNDL) are a coiled coil. Disordered stretches follow at residues 621-651 (ARPT…VASS) and 1005-1046 (SSST…PTDG). A compositionally biased stretch (pro residues) spans 626–647 (VTMPPRAPTAKPLPIPSAPTPP). Positions 1005-1015 (SSSTMVSTSSE) are enriched in low complexity. The segment covering 1016–1026 (SDSESAPEQET) has biased composition (acidic residues). Low complexity predominate over residues 1027-1044 (EPTVPSTTETTESPSTPT). Residues 1263-1283 (VQSSVSFHIILAALIPFFALF) traverse the membrane as a helical segment.

The protein resides in the membrane. This is an uncharacterized protein from Caenorhabditis elegans.